We begin with the raw amino-acid sequence, 341 residues long: GTPase Obg (341 aa).

Positions 1 to 159 constitute an Obg domain; it reads MKFLDQAKIY…RTIWLRLKLI (159 aa). In terms of domain architecture, OBG-type G spans 160–327; the sequence is ADAGLVGLPN…TLRQLARIID (168 aa). GTP contacts are provided by residues 166 to 173, 191 to 195, 212 to 215, 279 to 282, and 308 to 310; these read GLPNAGKS, FTTLH, DIPG, SQVD, and SAV. The Mg(2+) site is built by serine 173 and threonine 193.

It belongs to the TRAFAC class OBG-HflX-like GTPase superfamily. OBG GTPase family. Monomer. Mg(2+) serves as cofactor.

It is found in the cytoplasm. In terms of biological role, an essential GTPase which binds GTP, GDP and possibly (p)ppGpp with moderate affinity, with high nucleotide exchange rates and a fairly low GTP hydrolysis rate. Plays a role in control of the cell cycle, stress response, ribosome biogenesis and in those bacteria that undergo differentiation, in morphogenesis control. The protein is GTPase Obg of Brucella abortus biovar 1 (strain 9-941).